Consider the following 962-residue polypeptide: MASNSTKSFLADAGYGEQELDANSALMELDKGLRSGKLGEQCEAVVRFPRLFQKYPFPILINSAFLKLADVFRVGNNFLRLCVLKVTQQSEKHLEKILNVDEFVKRIFSVIHSNDPVARAITLRMLGSLASIIPERKNAHHSIRQSLDSHDNVEVEAAVFAAANFSAQSKDFAVGICNKISEMIQGLATPVDLKLKLIPILQHMHHDAILASSARQLLQQLVTSYPSTKMVIVSLHTFTLLAASSLVDTPKQIQLLLQYLKNDPRKAVKRLAIQDLKLLANKTPHTWSRENIQALCECALQTPYDSLKLGMLSVLSTLSGTIAIKHYFSIVPGNVSSSPRSSDLVKLAQECCYHNNRGIAAHGVRVLTNITVSCQEKDLLALEQDAVFGLESLLVLCSQDDSPGAQATLKIALNCMVKLAKGRPHLSQSVVETLLTQLHSAQDAARILMCHCLAAIAMQLPVLGDGMLGDLMELYKVIGRSATDKQQELLVSLATVIFVASQKALSVESKAVIKQQLESVSNGWTVYRIARQASRMGNHDMAKELYQSLLTQVASEHFYFWLNSLKEFSHAEQCLTGLQEENYSSALSCIAESLKFYHKGIASLTAASTPLNPLSFQCEFVKLRIDLLQAFSQLICTCNSLKTSPPPAIATTIAMTLGNDLQRCGRISNQMKQSMEEFRSLASRYGDLYQASFDADSATLRNVELQQQSCLLISHAIEALILDPESASFQEYGSTGTAHADSEYERRMMSVYNHVLEEVESLNRKYTPVSYMHTACLCNAIIALLKVPLSFQRYFFQKLQSTSIKLALSPSPRNPAEPIAVQNNQQLALKVEGVVQHGSKPGLFRKIQSVCLNVSSTLQSKSGQDYKIPIDNMTNEMEQRVEPHNDYFSTQFLLNFAILGTHNITVESSVKDANGIVWKTGPRTTIFVKSLEDPYSQQIRLQQQQAQQPLQQQQQRNAYTRF.

Residues serine 338 and serine 809 each carry the phosphoserine modification.

The protein belongs to the Integrator subunit 7 family. In terms of assembly, component of the Integrator complex, composed of core subunits INTS1, INTS2, INTS3, INTS4, INTS5, INTS6, INTS7, INTS8, INTS9/RC74, INTS10, INTS11/CPSF3L, INTS12, INTS13, INTS14 and INTS15. The core complex associates with protein phosphatase 2A subunits PPP2CA and PPP2R1A, to form the Integrator-PP2A (INTAC) complex. Interacts with NABP2.

The protein resides in the nucleus. It is found in the chromosome. The protein localises to the cytoplasm. In terms of biological role, component of the integrator complex, a multiprotein complex that terminates RNA polymerase II (Pol II) transcription in the promoter-proximal region of genes. The integrator complex provides a quality checkpoint during transcription elongation by driving premature transcription termination of transcripts that are unfavorably configured for transcriptional elongation: the complex terminates transcription by (1) catalyzing dephosphorylation of the C-terminal domain (CTD) of Pol II subunit POLR2A/RPB1 and SUPT5H/SPT5, (2) degrading the exiting nascent RNA transcript via endonuclease activity and (3) promoting the release of Pol II from bound DNA. The integrator complex is also involved in terminating the synthesis of non-coding Pol II transcripts, such as enhancer RNAs (eRNAs), small nuclear RNAs (snRNAs), telomerase RNAs and long non-coding RNAs (lncRNAs). May be not involved in the recruitment of cytoplasmic dynein to the nuclear envelope by different components of the INT complex. Plays a role in DNA damage response (DDR) signaling during the S phase. The protein is Integrator complex subunit 7 of Homo sapiens (Human).